A 436-amino-acid polypeptide reads, in one-letter code: Hydrogenobyrinate a,c-diamide synthase (436 aa).

Residues 244-435 (RIAVARDDAF…MHVIDFSGEA (192 aa)) form the GATase cobBQ-type domain. Cys-327 (nucleophile) is an active-site residue.

The protein belongs to the CobB/CbiA family. The cofactor is Mg(2+).

The catalysed reaction is hydrogenobyrinate + 2 L-glutamine + 2 ATP + 2 H2O = hydrogenobyrinate a,c-diamide + 2 L-glutamate + 2 ADP + 2 phosphate + 2 H(+). It functions in the pathway cofactor biosynthesis; adenosylcobalamin biosynthesis; cob(II)yrinate a,c-diamide from precorrin-2 (aerobic route): step 9/10. Functionally, catalyzes the ATP-dependent amidation of the two carboxylate groups at positions a and c of hydrogenobyrinate, using either L-glutamine or ammonia as the nitrogen source. The sequence is that of Hydrogenobyrinate a,c-diamide synthase from Brucella suis biovar 1 (strain 1330).